Consider the following 686-residue polypeptide: tRNA wybutosine-synthesizing protein 4 (686 aa).

Over residues 1–10 the composition is skewed to basic and acidic residues; that stretch reads MGPRSRERRA. The interval 1-21 is disordered; the sequence is MGPRSRERRAGAVQNTNDSSA. S-adenosyl-L-methionine contacts are provided by residues Arg-59, Gly-89, Asp-114, 161-162, and Glu-188; that span reads DL.

Belongs to the methyltransferase superfamily. LCMT family. Interacts with RNF144B/IBRDC2.

The enzyme catalyses 7-[(3S)-3-amino-3-carboxypropyl]wyosine(37) in tRNA(Phe) + S-adenosyl-L-methionine = 7-[(3S)-(3-amino-3-methoxycarbonyl)propyl]wyosine(37) in tRNA(Phe) + S-adenosyl-L-homocysteine. It carries out the reaction 7-[(3S)-(3-amino-3-methoxycarbonyl)propyl]wyosine(37) in tRNA(Phe) + S-adenosyl-L-methionine + CO2 = wybutosine(37) in tRNA(Phe) + S-adenosyl-L-homocysteine + 2 H(+). It functions in the pathway tRNA modification; wybutosine-tRNA(Phe) biosynthesis. Its function is as follows. Probable S-adenosyl-L-methionine-dependent methyltransferase that acts as a component of the wybutosine biosynthesis pathway. Wybutosine is a hyper modified guanosine with a tricyclic base found at the 3'-position adjacent to the anticodon of eukaryotic phenylalanine tRNA. May methylate the carboxyl group of leucine residues to form alpha-leucine ester residues. The protein is tRNA wybutosine-synthesizing protein 4 (LCMT2) of Homo sapiens (Human).